The sequence spans 243 residues: Methylthioribulose-1-phosphate dehydratase (243 aa).

The disordered stretch occupies residues 1–22; sequence MCPADQTVATNNNDHLVQSEDP. Residues 7–16 show a composition bias toward polar residues; that stretch reads TVATNNNDHL. A substrate-binding site is contributed by cysteine 103. Positions 120 and 122 each coordinate Zn(2+). The active-site Proton donor/acceptor is glutamate 149. Histidine 205 is a binding site for Zn(2+).

This sequence belongs to the aldolase class II family. MtnB subfamily. Requires Zn(2+) as cofactor.

It is found in the cytoplasm. The catalysed reaction is 5-(methylsulfanyl)-D-ribulose 1-phosphate = 5-methylsulfanyl-2,3-dioxopentyl phosphate + H2O. Its pathway is amino-acid biosynthesis; L-methionine biosynthesis via salvage pathway; L-methionine from S-methyl-5-thio-alpha-D-ribose 1-phosphate: step 2/6. Functionally, catalyzes the dehydration of methylthioribulose-1-phosphate (MTRu-1-P) into 2,3-diketo-5-methylthiopentyl-1-phosphate (DK-MTP-1-P). This is Methylthioribulose-1-phosphate dehydratase from Penicillium rubens (strain ATCC 28089 / DSM 1075 / NRRL 1951 / Wisconsin 54-1255) (Penicillium chrysogenum).